A 195-amino-acid polypeptide reads, in one-letter code: PRELI domain containing protein 3B (195 aa).

Residues 1–172 enclose the PRELI/MSF1 domain; that stretch reads MKIWTSEHVF…VIHKLNAEIE (172 aa). 2 positions are modified to phosphoserine: S46 and S51.

This sequence belongs to the slowmo family.

In Mus musculus (Mouse), this protein is PRELI domain containing protein 3B (Prelid3b).